Consider the following 64-residue polypeptide: Large ribosomal subunit protein uL1 (64 aa).

Belongs to the universal ribosomal protein uL1 family. As to quaternary structure, part of the 50S ribosomal subunit.

Binds directly to 23S rRNA. The L1 stalk is quite mobile in the ribosome, and is involved in E site tRNA release. Its function is as follows. Protein L1 is also a translational repressor protein, it controls the translation of the L11 operon by binding to its mRNA. This Streptomyces lavendulae protein is Large ribosomal subunit protein uL1 (rplA).